The sequence spans 72 residues: ATP synthase subunit c (72 aa).

Transmembrane regions (helical) follow at residues 5–25 and 52–72; these read LLAAGIAVLAGIGAGIGIGIA and GLSEATAIYGLVISIILLFVV.

This sequence belongs to the ATPase C chain family. As to quaternary structure, F-type ATPases have 2 components, F(1) - the catalytic core - and F(0) - the membrane proton channel. F(1) has five subunits: alpha(3), beta(3), gamma(1), delta(1), epsilon(1). F(0) has three main subunits: a(1), b(2) and c(10-14). The alpha and beta chains form an alternating ring which encloses part of the gamma chain. F(1) is attached to F(0) by a central stalk formed by the gamma and epsilon chains, while a peripheral stalk is formed by the delta and b chains.

It is found in the cell membrane. Its function is as follows. F(1)F(0) ATP synthase produces ATP from ADP in the presence of a proton or sodium gradient. F-type ATPases consist of two structural domains, F(1) containing the extramembraneous catalytic core and F(0) containing the membrane proton channel, linked together by a central stalk and a peripheral stalk. During catalysis, ATP synthesis in the catalytic domain of F(1) is coupled via a rotary mechanism of the central stalk subunits to proton translocation. In terms of biological role, key component of the F(0) channel; it plays a direct role in translocation across the membrane. A homomeric c-ring of between 10-14 subunits forms the central stalk rotor element with the F(1) delta and epsilon subunits. The sequence is that of ATP synthase subunit c from Clostridium perfringens (strain SM101 / Type A).